The primary structure comprises 263 residues: ATP synthase subunit a (263 aa).

A propeptide spans 1 to 14 (MYLNNNNNMKYYIN) (removed in mature form). 6 consecutive transmembrane segments (helical) span residues 35 to 57 (FSFI…ILTM), 95 to 117 (VWGY…NLIS), 129 to 151 (VVFV…FYTH), 156 to 178 (FGLF…IELL), 191 to 213 (LSAN…FNLM), and 228 to 250 (IAIL…VWCI).

The protein belongs to the ATPase A chain family. In terms of assembly, F-type ATPases have 2 components, CF(1) - the catalytic core - and CF(0) - the membrane proton channel. In yeast, the dimeric form of ATP synthase consists of 18 polypeptides: alpha, beta, gamma, delta, epsilon, 4 (B), 5 (OSCP), 6 (A), 8, 9 (C), d, E (Tim11), f, g, h, i, j and k.

It is found in the mitochondrion inner membrane. In terms of biological role, mitochondrial membrane ATP synthase (F(1)F(0) ATP synthase or Complex V) produces ATP from ADP in the presence of a proton gradient across the membrane which is generated by electron transport complexes of the respiratory chain. F-type ATPases consist of two structural domains, F(1) - containing the extramembraneous catalytic core and F(0) - containing the membrane proton channel, linked together by a central stalk and a peripheral stalk. During catalysis, ATP synthesis in the catalytic domain of F(1) is coupled via a rotary mechanism of the central stalk subunits to proton translocation. Key component of the proton channel; it may play a direct role in the translocation of protons across the membrane. The chain is ATP synthase subunit a (ATP6) from Eremothecium gossypii (strain ATCC 10895 / CBS 109.51 / FGSC 9923 / NRRL Y-1056) (Yeast).